The sequence spans 339 residues: N-acetylmuramate/N-acetylglucosamine kinase (339 aa).

It belongs to the kinase AmgK family.

The catalysed reaction is N-acetyl-D-muramate + ATP = N-acetyl-alpha-D-muramate 1-phosphate + ADP + H(+). It catalyses the reaction N-acetyl-D-glucosamine + ATP = N-acetyl-alpha-D-glucosamine 1-phosphate + ADP + H(+). It participates in cell wall biogenesis; peptidoglycan recycling. Its function is as follows. Sugar kinase that catalyzes the ATP-dependent phosphorylation of N-acetylmuramate (MurNAc) and N-acetylglucosamine (GlcNAc) at its C1 hydroxyl group, leading to MurNAc alpha-1P and GlcNAc alpha-1P, respectively. Is involved in peptidoglycan recycling as part of a cell wall recycling pathway that bypasses de novo biosynthesis of the peptidoglycan precursor UDP-MurNAc. Plays a role in intrinsic resistance to fosfomycin, which targets the de novo synthesis of UDP-MurNAc. Is also able to use N-acetylgalactosamine (GalNAc) as a substrate, but not N-acetylmannosamine, N-deacetylated sugars or glucose. This Pseudomonas putida (strain ATCC 47054 / DSM 6125 / CFBP 8728 / NCIMB 11950 / KT2440) protein is N-acetylmuramate/N-acetylglucosamine kinase.